A 494-amino-acid polypeptide reads, in one-letter code: Ketol-acid reductoisomerase (NADP(+)) (494 aa).

In terms of domain architecture, KARI N-terminal Rossmann spans 14–208 (LDQLGRCRFM…GGHRAGCLES (195 aa)). Residues 45 to 48 (CGAQ), arginine 68, arginine 76, serine 78, and 108 to 110 (DKQ) each bind NADP(+). Histidine 132 is a catalytic residue. NADP(+) is bound at residue glycine 158. 2 consecutive KARI C-terminal knotted domains span residues 209-344 (SFVA…NYPS) and 345-487 (TDVE…MTDM). Positions 217, 221, 389, and 393 each coordinate Mg(2+). Serine 414 serves as a coordination point for substrate.

This sequence belongs to the ketol-acid reductoisomerase family. The cofactor is Mg(2+).

The catalysed reaction is (2R)-2,3-dihydroxy-3-methylbutanoate + NADP(+) = (2S)-2-acetolactate + NADPH + H(+). It carries out the reaction (2R,3R)-2,3-dihydroxy-3-methylpentanoate + NADP(+) = (S)-2-ethyl-2-hydroxy-3-oxobutanoate + NADPH + H(+). It functions in the pathway amino-acid biosynthesis; L-isoleucine biosynthesis; L-isoleucine from 2-oxobutanoate: step 2/4. It participates in amino-acid biosynthesis; L-valine biosynthesis; L-valine from pyruvate: step 2/4. In terms of biological role, involved in the biosynthesis of branched-chain amino acids (BCAA). Catalyzes an alkyl-migration followed by a ketol-acid reduction of (S)-2-acetolactate (S2AL) to yield (R)-2,3-dihydroxy-isovalerate. In the isomerase reaction, S2AL is rearranged via a Mg-dependent methyl migration to produce 3-hydroxy-3-methyl-2-ketobutyrate (HMKB). In the reductase reaction, this 2-ketoacid undergoes a metal-dependent reduction by NADPH to yield (R)-2,3-dihydroxy-isovalerate. This Vibrio vulnificus (strain CMCP6) protein is Ketol-acid reductoisomerase (NADP(+)).